Here is a 103-residue protein sequence, read N- to C-terminus: Small ribosomal subunit protein uS10 (103 aa).

The interval 35 to 59 (LSGPVPLPTKTLEVPSRKSPDGEGT) is disordered.

The protein belongs to the universal ribosomal protein uS10 family. In terms of assembly, part of the 30S ribosomal subunit.

In terms of biological role, involved in the binding of tRNA to the ribosomes. This is Small ribosomal subunit protein uS10 (rps10) from Haloarcula marismortui (strain ATCC 43049 / DSM 3752 / JCM 8966 / VKM B-1809) (Halobacterium marismortui).